Here is a 146-residue protein sequence, read N- to C-terminus: Ribonuclease H (146 aa).

The region spanning 1–143 is the RNase H type-1 domain; it reads MRKKIIIYTD…CDYLARQAIK (143 aa). Mg(2+) contacts are provided by D10, E48, D70, and D135.

Belongs to the RNase H family. As to quaternary structure, monomer. Mg(2+) serves as cofactor.

The protein resides in the cytoplasm. It catalyses the reaction Endonucleolytic cleavage to 5'-phosphomonoester.. Its function is as follows. Endonuclease that specifically degrades the RNA of RNA-DNA hybrids. In Prosthecochloris aestuarii (strain DSM 271 / SK 413), this protein is Ribonuclease H.